A 235-amino-acid chain; its full sequence is Probable queuosine precursor transporter (235 aa).

6 helical membrane passes run 17–37, 56–76, 87–107, 127–147, 155–175, and 201–221; these read IIWLSFFHIFIIAASNYFVQI, FHSTWGTLTFPFIFLATDLTV, IIFVVMFPALIVSYVISVLFS, IAIASFAAYVVGQLLDVIVFN, WWVAPTSSMTFGSMADTFVFF, and FKLFIGIILFVPAYGVVLNVI.

Belongs to the vitamin uptake transporter (VUT/ECF) (TC 2.A.88) family. Q precursor transporter subfamily.

Its subcellular location is the cell inner membrane. Functionally, involved in the import of queuosine (Q) precursors, required for Q precursor salvage. In Haemophilus influenzae (strain ATCC 51907 / DSM 11121 / KW20 / Rd), this protein is Probable queuosine precursor transporter.